Consider the following 369-residue polypeptide: MCGNPAVGNGTRALILVGGYGTRLRPLTLSTPKPLVEFANKPILLHQLEALVDAGCRQVILAVSYRAEQMEKELKVEAKKLGVELIFSHETEPLGTAGPLALAKTILAASSEPFFVLNSDVICDFPFKQLVQFHCNHGKEGTIVVTKVEEPSKYGVVLYDENGCIKNFIEKPQEFVSNKINAGIYIFNPSVLDRIEVKPTSIEKEVFPEMTQQQELYAMDLTGFWMDIGQPKDFLTGMCLYLSSLRQKQSPKLYTGPGVVGNVLVDPTAKIGEGCRIGPNVTIGPDVVIEDGVCIKRSTILKGAIVRSHSWLDSCIVGWRSTVGRWVRIEGITVLGEDVIVKDELYINGGQVLPHKSIAASVPEPQIIM.

Residues 12–231 form a substrate-binding domain region; sequence RALILVGGYG…TGFWMDIGQP (220 aa). GDP-alpha-D-mannose is bound at residue Asp120. Residue Asp120 participates in Mg(2+) binding. The active site involves Lys171. A GDP-alpha-D-mannose-binding site is contributed by Asp227. Asp227 provides a ligand contact to Mg(2+). A hexapeptide repeat domain region spans residues 254-369; that stretch reads YTGPGVVGNV…ASVPEPQIIM (116 aa).

It belongs to the transferase hexapeptide repeat family. As to quaternary structure, component of the GMPPA-GMPPB mannose-1-phosphate guanylyltransferase complex composed of 4 Gmppa subunits and 8 Gmppb subunits; the complex is organized into three layers, a central layer made up of 2 Gmppa dimers sandwiched between two layers each made up of 2 Gmppb dimers. Gmppb catalytic activity is reduced when part of the complex and binding of GDP-alpha-D-Mannose by Gmppa induces allosteric feedback inhibition of Gmppb. The cofactor is Mg(2+).

It catalyses the reaction alpha-D-mannose 1-phosphate + GTP + H(+) = GDP-alpha-D-mannose + diphosphate. It participates in nucleotide-sugar biosynthesis; GDP-alpha-D-mannose biosynthesis; GDP-alpha-D-mannose from alpha-D-mannose 1-phosphate (GTP route): step 1/1. With respect to regulation, enzyme activity is reduced by incorporation into the GMPPA-GMPPB mannose-1-phosphate guanylyltransferase complex. Allosterically inhibited, when part of the GMPPA-GMPPB complex, by GDP-alpha-D-mannose binding to Gmppa. Catalytic subunit of the GMPPA-GMPPB mannose-1-phosphate guanylyltransferase complex. Catalyzes the formation of GDP-mannose, an essential precursor of glycan moieties of glycoproteins and glycolipids. Can catalyze the reverse reaction in vitro. Together with GMPPA regulates GDP-alpha-D-mannose levels. This is Mannose-1-phosphate guanylyltransferase catalytic subunit beta from Drosophila melanogaster (Fruit fly).